The sequence spans 305 residues: Methionyl-tRNA formyltransferase (305 aa).

Ser-111–Pro-114 contributes to the (6S)-5,6,7,8-tetrahydrofolate binding site.

It belongs to the Fmt family.

The enzyme catalyses L-methionyl-tRNA(fMet) + (6R)-10-formyltetrahydrofolate = N-formyl-L-methionyl-tRNA(fMet) + (6S)-5,6,7,8-tetrahydrofolate + H(+). Attaches a formyl group to the free amino group of methionyl-tRNA(fMet). The formyl group appears to play a dual role in the initiator identity of N-formylmethionyl-tRNA by promoting its recognition by IF2 and preventing the misappropriation of this tRNA by the elongation apparatus. This Helicobacter pylori (strain J99 / ATCC 700824) (Campylobacter pylori J99) protein is Methionyl-tRNA formyltransferase.